The following is a 258-amino-acid chain: Tetratricopeptide repeat protein 33 (258 aa).

3 TPR repeats span residues 59–92 (SKRL…TPGD), 93–126 (AALY…NPHF), and 127–160 (VEAW…CPAN). Residues 231 to 258 (SASGSENLSDRKEDKVETNDSKEFIKAR) are disordered. Residues 238–258 (LSDRKEDKVETNDSKEFIKAR) show a composition bias toward basic and acidic residues.

The sequence is that of Tetratricopeptide repeat protein 33 (ttc33) from Xenopus laevis (African clawed frog).